A 907-amino-acid polypeptide reads, in one-letter code: Coatomer subunit beta'-1 (907 aa).

WD repeat units follow at residues Gln-13–Ser-52, Val-55–Val-94, Ala-97–Gln-136, Gly-140–Thr-180, Gly-183–Thr-224, Gly-227–Thr-266, Tyr-269–Asp-309, Ser-351–Phe-389, and Arg-461–Glu-501. Composition is skewed to acidic residues over residues Glu-850–Leu-866 and Ser-874–Glu-887. The interval Glu-850–Glu-887 is disordered.

The protein belongs to the WD repeat COPB2 family. Oligomeric complex that consists of at least the alpha, beta, beta', gamma, delta, epsilon and zeta subunits.

It localises to the cytoplasm. It is found in the golgi apparatus membrane. Its subcellular location is the cytoplasmic vesicle. The protein resides in the COPI-coated vesicle membrane. In terms of biological role, the coatomer is a cytosolic protein complex that binds to dilysine motifs and reversibly associates with Golgi non-clathrin-coated vesicles, which further mediate biosynthetic protein transport from the ER, via the Golgi up to the trans Golgi network. Coatomer complex is required for budding from Golgi membranes, and is essential for the retrograde Golgi-to-ER transport of dilysine-tagged proteins. This Oryza sativa subsp. japonica (Rice) protein is Coatomer subunit beta'-1.